The chain runs to 590 residues: Aspartate--tRNA ligase (590 aa).

E174 lines the L-aspartate pocket. Positions 198–201 (QLMK) are aspartate. R220 contributes to the L-aspartate binding site. ATP-binding positions include 220–222 (RDE) and Q229. Residue H443 coordinates L-aspartate. E484 is an ATP binding site. Position 491 (R491) interacts with L-aspartate. 536-539 (GLDR) contacts ATP.

This sequence belongs to the class-II aminoacyl-tRNA synthetase family. Type 1 subfamily. Homodimer.

The protein localises to the cytoplasm. The enzyme catalyses tRNA(Asp) + L-aspartate + ATP = L-aspartyl-tRNA(Asp) + AMP + diphosphate. Catalyzes the attachment of L-aspartate to tRNA(Asp) in a two-step reaction: L-aspartate is first activated by ATP to form Asp-AMP and then transferred to the acceptor end of tRNA(Asp). The protein is Aspartate--tRNA ligase of Lactococcus lactis subsp. cremoris (strain MG1363).